Here is a 515-residue protein sequence, read N- to C-terminus: Maturase K (515 aa).

Belongs to the intron maturase 2 family. MatK subfamily.

The protein localises to the plastid. It is found in the chloroplast. Its function is as follows. Usually encoded in the trnK tRNA gene intron. Probably assists in splicing its own and other chloroplast group II introns. The polypeptide is Maturase K (Trillium luteum (Yellow wakerobin)).